The following is a 218-amino-acid chain: Ras-related protein Rab-42 (218 aa).

Ala19, Gly21, Lys22, Thr23, and Thr46 together coordinate GTP. Positions 23, 46, and 70 each coordinate Mg(2+). Residues Gly73, Lys130, Asp132, Val160, and Lys161 each contribute to the GTP site. S-geranylgeranyl cysteine attachment occurs at residues Cys216 and Cys218.

The protein belongs to the small GTPase superfamily. Rab family. Mg(2+) is required as a cofactor.

The protein resides in the membrane. The catalysed reaction is GTP + H2O = GDP + phosphate + H(+). Its activity is regulated as follows. Regulated by guanine nucleotide exchange factors (GEFs) which promote the exchange of bound GDP for free GTP. Regulated by GTPase activating proteins (GAPs) which increase the GTP hydrolysis activity. Inhibited by GDP dissociation inhibitors (GDIs). In terms of biological role, the small GTPases Rab are key regulators of intracellular membrane trafficking, from the formation of transport vesicles to their fusion with membranes. Rabs cycle between an inactive GDP-bound form and an active GTP-bound form that is able to recruit to membranes different sets of downstream effectors directly responsible for vesicle formation, movement, tethering and fusion. The physiological function of RAB42 remains undefined. The chain is Ras-related protein Rab-42 from Homo sapiens (Human).